The primary structure comprises 403 residues: Beta-galactoside alpha-2,6-sialyltransferase 1 (403 aa).

The Cytoplasmic segment spans residues 1-9 (MIHTNLKRK). Residues 10-26 (FSCFVLVFLLFAIICVW) form a helical; Signal-anchor for type II membrane protein membrane-spanning segment. Residues 27-403 (KKGSDYEALT…TLSGFRNNRC (377 aa)) lie on the Lumenal side of the membrane. 3 disulfide bridges follow: C139/C403, C181/C332, and C350/C361. Residues N146 and N158 are each glycosylated (N-linked (GlcNAc...) asparagine). Substrate-binding positions include S186, N209, N230, 319 to 321 (SSG), C350, Y351, T362, Y366, H367, and K373. Y366 carries the phosphotyrosine modification.

The protein belongs to the glycosyltransferase 29 family. As to quaternary structure, monomer and homodimer. N-glycosylated.

It localises to the golgi apparatus. The protein resides in the golgi stack membrane. Its subcellular location is the secreted. The catalysed reaction is a beta-D-galactoside + CMP-N-acetyl-beta-neuraminate = an N-acetyl-alpha-neuraminyl-(2-&gt;6)-beta-D-galactosyl derivative + CMP + H(+). It participates in protein modification; protein glycosylation. Functionally, transfers sialic acid from CMP-sialic acid to galactose-containing acceptor substrates. This chain is Beta-galactoside alpha-2,6-sialyltransferase 1 (St6gal1), found in Mus musculus (Mouse).